The primary structure comprises 95 residues: Opiscorpine-4 (95 aa).

Residues M1–C19 form the signal peptide. The BetaSPN-type CS-alpha/beta domain occupies E55–Y95. 3 disulfides stabilise this stretch: C58-C82, C68-C87, and C72-C89.

This sequence belongs to the long chain scorpion toxin family. Class 3 subfamily. In terms of tissue distribution, expressed by the venom gland.

The protein resides in the secreted. Its function is as follows. Has antimicrobial activity against yeasts and bacteria. The polypeptide is Opiscorpine-4 (Opistophthalmus carinatus (African yellow leg scorpion)).